Reading from the N-terminus, the 377-residue chain is Adaptive-response sensory kinase SasA (377 aa).

Positions 154-373 (MLVHDLRSPL…SFHFTLPVYR (220 aa)) constitute a Histidine kinase domain. Phosphohistidine; by autocatalysis is present on H157.

In terms of assembly, homooligomerizes. Interacts with KaiC. Participates in the KaiABC clock complex, whose core is composed of a KaiC homohexamer, 6 KaiB and up to 6 KaiA dimers. SasA and KaiB(fs) compete to bind to KaiC.

The enzyme catalyses ATP + protein L-histidine = ADP + protein N-phospho-L-histidine.. Its function is as follows. Member of the two-component regulatory system SasA/RpaA involved in genome-wide circadian gene expression. One of several clock output pathways. Participates in the Kai clock protein complex, the main circadian regulator in cyanobacteria, via its interaction with KaiC. KaiC enhances the autophosphorylation activity of SasA, which then transfers its phosphate group to RpaA to activate it. In addition to its output function, recruits fold-shifted KaiB (KaiB(fs)) to KaiC to cooperatively form the KaiB(6):KaiC(6) complex (independent of SasA kinase activity). Required for robustness of the circadian rhythm of gene expression and is involved in clock output, also required for adaptation to light/dark cycles. In Synechococcus sp. (strain JA-3-3Ab) (Cyanobacteria bacterium Yellowstone A-Prime), this protein is Adaptive-response sensory kinase SasA.